The chain runs to 537 residues: CTP synthase (537 aa).

The tract at residues 1–265 is amidoligase domain; the sequence is MVHFIFVTGG…DNKVLKFFNI (265 aa). Ser-13 serves as a coordination point for CTP. Ser-13 provides a ligand contact to UTP. Residues 14 to 19 and Asp-71 each bind ATP; that span reads SLGKGL. Mg(2+) is bound by residues Asp-71 and Glu-139. CTP is bound by residues 146–148 and Lys-222; that span reads DIE. Lys-222 provides a ligand contact to UTP. Residues 290 to 536 enclose the Glutamine amidotransferase type-1 domain; it reads RIAIIAKYHK…IKAAIEYNKC (247 aa). Residue Gly-352 participates in L-glutamine binding. Catalysis depends on Cys-379, which acts as the Nucleophile; for glutamine hydrolysis. Residues 380 to 383, Glu-403, and Arg-464 contribute to the L-glutamine site; that span reads FGMQ. Residues His-509 and Glu-511 contribute to the active site.

This sequence belongs to the CTP synthase family. In terms of assembly, homotetramer.

It catalyses the reaction UTP + L-glutamine + ATP + H2O = CTP + L-glutamate + ADP + phosphate + 2 H(+). The enzyme catalyses L-glutamine + H2O = L-glutamate + NH4(+). The catalysed reaction is UTP + NH4(+) + ATP = CTP + ADP + phosphate + 2 H(+). Its pathway is pyrimidine metabolism; CTP biosynthesis via de novo pathway; CTP from UDP: step 2/2. Its activity is regulated as follows. Allosterically activated by GTP, when glutamine is the substrate; GTP has no effect on the reaction when ammonia is the substrate. The allosteric effector GTP functions by stabilizing the protein conformation that binds the tetrahedral intermediate(s) formed during glutamine hydrolysis. Inhibited by the product CTP, via allosteric rather than competitive inhibition. Catalyzes the ATP-dependent amination of UTP to CTP with either L-glutamine or ammonia as the source of nitrogen. Regulates intracellular CTP levels through interactions with the four ribonucleotide triphosphates. This chain is CTP synthase, found in Rickettsia conorii (strain ATCC VR-613 / Malish 7).